Here is a 44-residue protein sequence, read N- to C-terminus: Thymosin beta-4 (44 aa).

Basic and acidic residues predominate over residues 1 to 25 (MADKPDMAEIEKFDKSKLKKTETQE). Residues 1 to 44 (MADKPDMAEIEKFDKSKLKKTETQEKNPLPSKETIEQEKQAGES) form a disordered region. An N-acetylalanine modification is found at Ala2. Lys4 bears the N6-acetyllysine mark. Residue Lys12 is modified to N6-acetyllysine; alternate. A Glycyl lysine isopeptide (Lys-Gly) (interchain with G-Cter in SUMO2); alternate cross-link involves residue Lys12. Position 23 is a phosphothreonine (Thr23). Residue Lys26 is modified to N6-acetyllysine. Ser31 bears the Phosphoserine mark. N6-acetyllysine is present on Lys32. A compositionally biased stretch (basic and acidic residues) spans 33–44 (ETIEQEKQAGES). A Phosphothreonine modification is found at Thr34. Lys39 bears the N6-acetyllysine mark.

Belongs to the thymosin beta family. In terms of tissue distribution, originally found in thymus but it is widely distributed in many tissues.

Its subcellular location is the cytoplasm. The protein resides in the cytoskeleton. In terms of biological role, plays an important role in the organization of the cytoskeleton. Binds to and sequesters actin monomers (G actin) and therefore inhibits actin polymerization. Its function is as follows. Seraspenide inhibits the entry of hematopoietic pluripotent stem cells into the S-phase. The polypeptide is Thymosin beta-4 (TMSB4) (Oryctolagus cuniculus (Rabbit)).